A 701-amino-acid chain; its full sequence is Coiled-coil domain-containing protein 62 (701 aa).

Coiled coils occupy residues 61–197 (ETST…LQAR) and 241–342 (TCVV…QFLN). Positions 624 to 652 (KSAEREEESAALPDRRTSANEKDDFSPTS) are disordered. Positions 636–648 (PDRRTSANEKDDF) are enriched in basic and acidic residues. 2 consecutive short sequence motifs (LXXLL motif) follow at residues 654–658 (LQRLL) and 670–674 (LSTLL).

In terms of assembly, interacts with ESR1 and ESR2 in the presence of estradiol/E2. The interaction with ESR2 recruits CCDC62 to ER target genes, including cyclin-D1/CCND1 AP-1 promoter. Interacts with GOPC. Highly expressed in testis, not detected in other tissues (at protein level). Expressed at low levels in the epididymis, lung, spleen, bladder, kidney, liver, muscle.

It localises to the cytoplasm. It is found in the nucleus. Its subcellular location is the cytoplasmic vesicle. The protein localises to the secretory vesicle. The protein resides in the acrosome. Nuclear receptor coactivator that can enhance preferentially estrogen receptors ESR1 and ESR2 transactivation. Also modulates progesterone/PGR, glucocorticoid/NR3C1 and androgen/AR receptors transactivation, although at lower level; little effect on vitamin D receptor/VDR. Required for normal spermiogenesis. It probably plays a role in acrosome formation. The polypeptide is Coiled-coil domain-containing protein 62 (Ccdc62) (Mus musculus (Mouse)).